We begin with the raw amino-acid sequence, 207 residues long: Small ribosomal subunit protein bS6c (207 aa).

The N-terminal 59 residues, Met1–Leu59, are a transit peptide targeting the chloroplast. A disordered region spans residues Gly69–Gly99. The segment covering Thr77–Thr86 has biased composition (low complexity).

Belongs to the bacterial ribosomal protein bS6 family. Part of the 30S ribosomal subunit.

It is found in the plastid. The protein localises to the chloroplast. Binds together with bS18 to 16S ribosomal RNA. The chain is Small ribosomal subunit protein bS6c (RPS6) from Arabidopsis thaliana (Mouse-ear cress).